A 316-amino-acid polypeptide reads, in one-letter code: N-acetylmuramic acid 6-phosphate etherase (316 aa).

A disordered region spans residues 1 to 23; that stretch reads MAGFDPTLQPSDDRGHLLTEQSN. Residues 66–229 enclose the SIS domain; the sequence is ISKRLSSGGR…STTVMVRLGK (164 aa). Glu-94 (proton donor) is an active-site residue. Glu-125 is an active-site residue.

Belongs to the GCKR-like family. MurNAc-6-P etherase subfamily. Homodimer.

The enzyme catalyses N-acetyl-D-muramate 6-phosphate + H2O = N-acetyl-D-glucosamine 6-phosphate + (R)-lactate. It participates in amino-sugar metabolism; N-acetylmuramate degradation. Specifically catalyzes the cleavage of the D-lactyl ether substituent of MurNAc 6-phosphate, producing GlcNAc 6-phosphate and D-lactate. This chain is N-acetylmuramic acid 6-phosphate etherase, found in Synechococcus sp. (strain CC9902).